The primary structure comprises 154 residues: D-aminoacyl-tRNA deacylase (154 aa).

A Gly-cisPro motif, important for rejection of L-amino acids motif is present at residues 142 to 143 (GP).

The protein belongs to the DTD family. Homodimer.

It is found in the cytoplasm. It carries out the reaction glycyl-tRNA(Ala) + H2O = tRNA(Ala) + glycine + H(+). The enzyme catalyses a D-aminoacyl-tRNA + H2O = a tRNA + a D-alpha-amino acid + H(+). In terms of biological role, an aminoacyl-tRNA editing enzyme that deacylates mischarged D-aminoacyl-tRNAs. Also deacylates mischarged glycyl-tRNA(Ala), protecting cells against glycine mischarging by AlaRS. Acts via tRNA-based rather than protein-based catalysis; rejects L-amino acids rather than detecting D-amino acids in the active site. By recycling D-aminoacyl-tRNA to D-amino acids and free tRNA molecules, this enzyme counteracts the toxicity associated with the formation of D-aminoacyl-tRNA entities in vivo and helps enforce protein L-homochirality. This chain is D-aminoacyl-tRNA deacylase (DTD1), found in Yarrowia lipolytica (strain CLIB 122 / E 150) (Yeast).